The sequence spans 238 residues: Ubiquinone biosynthesis O-methyltransferase (238 aa).

S-adenosyl-L-methionine contacts are provided by arginine 36, glycine 56, aspartate 77, and methionine 125.

It belongs to the methyltransferase superfamily. UbiG/COQ3 family.

It carries out the reaction a 3-demethylubiquinol + S-adenosyl-L-methionine = a ubiquinol + S-adenosyl-L-homocysteine + H(+). It catalyses the reaction a 3-(all-trans-polyprenyl)benzene-1,2-diol + S-adenosyl-L-methionine = a 2-methoxy-6-(all-trans-polyprenyl)phenol + S-adenosyl-L-homocysteine + H(+). It functions in the pathway cofactor biosynthesis; ubiquinone biosynthesis. Its function is as follows. O-methyltransferase that catalyzes the 2 O-methylation steps in the ubiquinone biosynthetic pathway. This chain is Ubiquinone biosynthesis O-methyltransferase, found in Histophilus somni (strain 2336) (Haemophilus somnus).